Consider the following 428-residue polypeptide: Autophagy-related protein 14 (428 aa).

A coiled-coil region spans residues 82 to 143 (QEAIDRTAEI…RKKQLDKVKD (62 aa)).

It belongs to the ATG14 family. Component of the autophagy-specific VPS34 PI3-kinase complex I.

Its subcellular location is the preautophagosomal structure membrane. It is found in the vacuole membrane. In terms of biological role, required for cytoplasm to vacuole transport (Cvt) and autophagy as a part of the autophagy-specific VPS34 PI3-kinase complex I. This complex is essential to recruit the ATG8-phosphatidylinositol conjugate and the ATG12-ATG5 conjugate to the pre-autophagosomal structure. ATG14 mediates the specific binding of the VPS34 PI3-kinase complex I to the preautophagosomal structure (PAS). Plays a crucial role in hyphal development, conidiogenesis and pathogenicity. Also required for glycogen mobilization, quantity of lipid bodies, and the turgor pressure of appressoria. The protein is Autophagy-related protein 14 of Pyricularia oryzae (strain 70-15 / ATCC MYA-4617 / FGSC 8958) (Rice blast fungus).